The chain runs to 239 residues: O-antigen export system ATP-binding protein RfbE (239 aa).

The ABC transporter domain occupies 28–239 (VRVSTGGRIG…LIYEESMDIL (212 aa)). 66 to 73 (GHNGAGKS) serves as a coordination point for ATP.

It belongs to the ABC transporter superfamily.

It localises to the cell inner membrane. May form an ATP-driven O-antigen export apparatus, in association with RfbD. This is O-antigen export system ATP-binding protein RfbE (rfbE) from Yersinia enterocolitica.